The sequence spans 393 residues: Bifunctional enzyme IspD/IspF (393 aa).

The tract at residues 1-234 is 2-C-methyl-D-erythritol 4-phosphate cytidylyltransferase; that stretch reads MTTSQRTAAI…ARLAASLGDI (234 aa). The tract at residues 235 to 393 is 2-C-methyl-D-erythritol 2,4-cyclodiphosphate synthase; sequence RTGTGYDVHA…SATIRLPWGA (159 aa). A divalent metal cation contacts are provided by aspartate 241 and histidine 243. Residues 241–243 and 267–268 contribute to the 4-CDP-2-C-methyl-D-erythritol 2-phosphate site; these read DVH and HS. Histidine 275 lines the a divalent metal cation pocket. 4-CDP-2-C-methyl-D-erythritol 2-phosphate-binding positions include 289–291, 365–368, phenylalanine 372, and arginine 375; these read DIG and TTSE.

In the N-terminal section; belongs to the IspD/TarI cytidylyltransferase family. IspD subfamily. This sequence in the C-terminal section; belongs to the IspF family. A divalent metal cation serves as cofactor.

The catalysed reaction is 2-C-methyl-D-erythritol 4-phosphate + CTP + H(+) = 4-CDP-2-C-methyl-D-erythritol + diphosphate. The enzyme catalyses 4-CDP-2-C-methyl-D-erythritol 2-phosphate = 2-C-methyl-D-erythritol 2,4-cyclic diphosphate + CMP. Its pathway is isoprenoid biosynthesis; isopentenyl diphosphate biosynthesis via DXP pathway; isopentenyl diphosphate from 1-deoxy-D-xylulose 5-phosphate: step 2/6. The protein operates within isoprenoid biosynthesis; isopentenyl diphosphate biosynthesis via DXP pathway; isopentenyl diphosphate from 1-deoxy-D-xylulose 5-phosphate: step 4/6. Functionally, bifunctional enzyme that catalyzes the formation of 4-diphosphocytidyl-2-C-methyl-D-erythritol from CTP and 2-C-methyl-D-erythritol 4-phosphate (MEP) (IspD), and catalyzes the conversion of 4-diphosphocytidyl-2-C-methyl-D-erythritol 2-phosphate (CDP-ME2P) to 2-C-methyl-D-erythritol 2,4-cyclodiphosphate (ME-CPP) with a corresponding release of cytidine 5-monophosphate (CMP) (IspF). The protein is Bifunctional enzyme IspD/IspF of Bradyrhizobium sp. (strain ORS 278).